We begin with the raw amino-acid sequence, 143 residues long: AP-2 complex subunit sigma (143 aa).

The protein belongs to the adaptor complexes small subunit family. In terms of assembly, adaptor protein complex 2 (AP-2) is a heterotetramer composed of two large adaptins (alpha-type subunit APL3 and beta-type subunit APL1), a medium chain (mu-type subunit APM4) and a small adaptin (sigma-type subunit APS2).

The protein resides in the cell membrane. It localises to the membrane. It is found in the coated pit. Its function is as follows. Component of the adaptor complexes which link clathrin to receptors in coated vesicles. Clathrin-associated protein complexes are believed to interact with the cytoplasmic tails of membrane proteins, leading to their selection and concentration. In Gibberella zeae (strain ATCC MYA-4620 / CBS 123657 / FGSC 9075 / NRRL 31084 / PH-1) (Wheat head blight fungus), this protein is AP-2 complex subunit sigma (APS2).